A 370-amino-acid polypeptide reads, in one-letter code: 3-dehydroquinate synthase (370 aa).

NAD(+)-binding positions include 108 to 112, 132 to 133, Lys-145, and Lys-154; these read GVIGD and TT. Glu-187, His-249, and His-267 together coordinate Zn(2+).

Belongs to the sugar phosphate cyclases superfamily. Dehydroquinate synthase family. The cofactor is Co(2+). It depends on Zn(2+) as a cofactor. Requires NAD(+) as cofactor.

It is found in the cytoplasm. The enzyme catalyses 7-phospho-2-dehydro-3-deoxy-D-arabino-heptonate = 3-dehydroquinate + phosphate. Its pathway is metabolic intermediate biosynthesis; chorismate biosynthesis; chorismate from D-erythrose 4-phosphate and phosphoenolpyruvate: step 2/7. Its function is as follows. Catalyzes the conversion of 3-deoxy-D-arabino-heptulosonate 7-phosphate (DAHP) to dehydroquinate (DHQ). The protein is 3-dehydroquinate synthase of Cereibacter sphaeroides (strain ATCC 17023 / DSM 158 / JCM 6121 / CCUG 31486 / LMG 2827 / NBRC 12203 / NCIMB 8253 / ATH 2.4.1.) (Rhodobacter sphaeroides).